Reading from the N-terminus, the 493-residue chain is Lysine--tRNA ligase (493 aa).

The Mg(2+) site is built by Glu-403 and Glu-410.

This sequence belongs to the class-II aminoacyl-tRNA synthetase family. As to quaternary structure, homodimer. It depends on Mg(2+) as a cofactor.

The protein resides in the cytoplasm. The catalysed reaction is tRNA(Lys) + L-lysine + ATP = L-lysyl-tRNA(Lys) + AMP + diphosphate. The protein is Lysine--tRNA ligase of Wigglesworthia glossinidia brevipalpis.